The chain runs to 501 residues: MPSANASRKGQEKPREIVDAAEDYAKERYGVSSMIQSQEKPDRVLVRVKDLTVQKADEVVWVRARVHTSRAKGKQCFLVLRQQQFNVQALVAVGDHASKQMVKFAANINKESIIDVEGIVRKVNQKIGSCTQQDVELHVQKIYVISLAEPRLPLQLDDAIRPEVEGEEDGRATVNQDTRLDNRIIDLRTSTSQAIFHLQSGICHLFRETLINKGFVEIQTPKIISAASEGGANVFTVSYFKSNAYLAQSPQLYKQMCICADFEKVFCIGPVFRAEDSNTHRHLTEFVGLDIEMAFNYHYHEVVEEIADTLVQIFKGLQERFQTEIQTVNKQFPCEPFKFLEPTLRLEYCEALAMLREAGVEMDDEEDLSTPNEKLLGRLVKEKYDTDFYVLDKYPLAVRPFYTMPDPRNPKQSNSYDMFMRGEEILSGAQRIHDPQLLTERALHHGIDLEKIKAYIDSFRFGAPPHAGGGIGLERVTMLFLGLHNVRQTSMFPRDPKRLTP.

Residue Thr52 is modified to Phosphothreonine. Residue Lys74 is modified to N6-acetyllysine. L-aspartate is bound at residue Glu229. A Phosphoserine modification is found at Ser249. The aspartate stretch occupies residues 251–254 (QLYK). Arg273 contacts L-aspartate. ATP is bound by residues 273-275 (RAE) and 281-283 (RHL). At Lys374 the chain carries N6-acetyllysine. ATP is bound at residue Glu424. Residues Ser427 and Arg431 each contribute to the L-aspartate site. Residue 472 to 475 (GLER) participates in ATP binding.

It belongs to the class-II aminoacyl-tRNA synthetase family. Type 2 subfamily. Homodimer. Part of a multisubunit complex that groups tRNA ligases for Arg (RARS1), Asp (DARS1), Gln (QARS1), Ile (IARS1), Leu (LARS1), Lys (KARS1), Met (MARS1) the bifunctional ligase for Glu and Pro (EPRS1) and the auxiliary subunits AIMP1/p43, AIMP2/p38 and EEF1E1/p18.

The protein localises to the cytoplasm. It catalyses the reaction tRNA(Asp) + L-aspartate + ATP = L-aspartyl-tRNA(Asp) + AMP + diphosphate. In terms of biological role, catalyzes the specific attachment of an amino acid to its cognate tRNA in a 2 step reaction: the amino acid (AA) is first activated by ATP to form AA-AMP and then transferred to the acceptor end of the tRNA. The chain is Aspartate--tRNA ligase, cytoplasmic (Dars1) from Rattus norvegicus (Rat).